Reading from the N-terminus, the 423-residue chain is Elongation factor 1-alpha (423 aa).

A tr-type G domain is found at 5 to 211 (KEHINLAFIG…DNLEPPEKPT (207 aa)). Residues 14-21 (GHVDHGKS) are G1. 14–21 (GHVDHGKS) provides a ligand contact to GTP. Residue serine 21 coordinates Mg(2+). The tract at residues 60 to 64 (GVTID) is G2. Residues 81-84 (DCPG) form a G3 region. Residues 81-85 (DCPGH) and 136-139 (NKMD) contribute to the GTP site. Residues 136–139 (NKMD) are G4. The G5 stretch occupies residues 175–177 (SAF).

The protein belongs to the TRAFAC class translation factor GTPase superfamily. Classic translation factor GTPase family. EF-Tu/EF-1A subfamily.

The protein resides in the cytoplasm. The enzyme catalyses GTP + H2O = GDP + phosphate + H(+). Functionally, GTP hydrolase that promotes the GTP-dependent binding of aminoacyl-tRNA to the A-site of ribosomes during protein biosynthesis. The protein is Elongation factor 1-alpha of Methanopyrus kandleri (strain AV19 / DSM 6324 / JCM 9639 / NBRC 100938).